The primary structure comprises 353 residues: Methionine import ATP-binding protein MetN (353 aa).

Positions 8 to 249 (LDQIDVTFHQ…PKQPLTQDFI (242 aa)) constitute an ABC transporter domain. 42-49 (GYSGAGKS) serves as a coordination point for ATP.

It belongs to the ABC transporter superfamily. Methionine importer (TC 3.A.1.24) family. As to quaternary structure, the complex is composed of two ATP-binding proteins (MetN), two transmembrane proteins (MetI) and a solute-binding protein (MetQ).

It is found in the cell membrane. The catalysed reaction is L-methionine(out) + ATP + H2O = L-methionine(in) + ADP + phosphate + H(+). The enzyme catalyses D-methionine(out) + ATP + H2O = D-methionine(in) + ADP + phosphate + H(+). Functionally, part of the ABC transporter complex MetNIQ involved in methionine import. Responsible for energy coupling to the transport system. This chain is Methionine import ATP-binding protein MetN, found in Streptococcus pneumoniae (strain ATCC BAA-255 / R6).